We begin with the raw amino-acid sequence, 116 residues long: Neuropeptide Y receptor type 1 (116 aa).

The chain crosses the membrane as a helical span at residues 1 to 6; sequence LVLIAV. The Cytoplasmic portion of the chain corresponds to 7–24; the sequence is ERHQLIINPRGWRPSNRH. Residues 25-45 form a helical membrane-spanning segment; sequence AYVGIAVIWVLAVASSLPFLI. Residues 46–81 are Extracellular-facing; sequence YQVLTDEPFQNVTLDAFKDKYVCFDKFPSDSHRLSY. N-linked (GlcNAc...) asparagine glycosylation occurs at Asn-56. Residues 82-102 form a helical membrane-spanning segment; sequence TTLLLVLQYFGPLCFIFICYF. The Cytoplasmic segment spans residues 103 to 116; sequence KIYIRLKRRNNMMD.

It belongs to the G-protein coupled receptor 1 family.

The protein resides in the cell membrane. In terms of biological role, receptor for neuropeptide Y and peptide YY. This is Neuropeptide Y receptor type 1 (NPY1R) from Ovis aries (Sheep).